Here is a 211-residue protein sequence, read N- to C-terminus: Glycerol-3-phosphate acyltransferase (211 aa).

Transmembrane regions (helical) follow at residues 5–25 (ALGM…ILFC), 58–78 (VLVF…ALGV), 80–100 (PLYL…PVFF), 112–132 (LGAI…TWLL), and 138–158 (GYSS…VWWF).

The protein belongs to the PlsY family. As to quaternary structure, probably interacts with PlsX.

The protein resides in the cell inner membrane. The catalysed reaction is an acyl phosphate + sn-glycerol 3-phosphate = a 1-acyl-sn-glycero-3-phosphate + phosphate. It participates in lipid metabolism; phospholipid metabolism. Its function is as follows. Catalyzes the transfer of an acyl group from acyl-phosphate (acyl-PO(4)) to glycerol-3-phosphate (G3P) to form lysophosphatidic acid (LPA). This enzyme utilizes acyl-phosphate as fatty acyl donor, but not acyl-CoA or acyl-ACP. This Pectobacterium atrosepticum (strain SCRI 1043 / ATCC BAA-672) (Erwinia carotovora subsp. atroseptica) protein is Glycerol-3-phosphate acyltransferase.